The chain runs to 238 residues: Phosphoglycolate phosphatase (238 aa).

Asp8 serves as the catalytic Nucleophile. Mg(2+) is bound by residues Asp8 and Asp10. Residue Lys163 coordinates substrate. Mg(2+)-binding residues include Asp186 and Asp190.

Belongs to the archaeal SPP-like hydrolase family. Mg(2+) is required as a cofactor.

It catalyses the reaction 2-phosphoglycolate + H2O = glycolate + phosphate. Its function is as follows. Catalyzes the dephosphorylation of 2-phosphoglycolate. This chain is Phosphoglycolate phosphatase, found in Staphylothermus marinus (strain ATCC 43588 / DSM 3639 / JCM 9404 / F1).